Here is a 25-residue protein sequence, read N- to C-terminus: Mu-conotoxin CnIIIB (25 aa).

Gln1 carries the post-translational modification Pyrrolidone carboxylic acid; partial. Cystine bridges form between Cys3–Cys15, Cys4–Cys21, and Cys10–Cys22.

Belongs to the conotoxin M superfamily. As to expression, expressed by the venom duct.

The protein resides in the secreted. In terms of biological role, mu-conotoxins block voltage-gated sodium channels (Nav). This synthetic toxin blocks slightly but irreversibly tetrodotoxin-resistant VGSCs. The sequence is that of Mu-conotoxin CnIIIB from Conus consors (Singed cone).